Consider the following 126-residue polypeptide: Histone H2B 1.1 (126 aa).

Residues 1–12 (MPEPAKSAPAPK) show a composition bias toward low complexity. The segment at 1-35 (MPEPAKSAPAPKKGSKKAVTKTQKKDGKKRRKSRK) is disordered. N6-acetyllysine occurs at positions 6 and 13. Phosphoserine is present on serine 15. N6-acetyllysine is present on residues lysine 16 and lysine 21. O-linked (GlcNAc) serine glycosylation is present at serine 113. Lysine 121 is covalently cross-linked (Glycyl lysine isopeptide (Lys-Gly) (interchain with G-Cter in ubiquitin)).

This sequence belongs to the histone H2B family. As to quaternary structure, the nucleosome is a histone octamer containing two molecules each of H2A, H2B, H3 and H4 assembled in one H3-H4 heterotetramer and two H2A-H2B heterodimers. The octamer wraps approximately 147 bp of DNA. In terms of processing, monoubiquitination of Lys-121 by BRE1 gives a specific tag for epigenetic transcriptional activation and is also prerequisite for histone H3 'Lys-4' and 'Lys-79' methylation. Phosphorylated on Ser-15 during developmentally programmed apoptosis; which may facilitate apoptotic chromatin condensation. Post-translationally, glcNAcylation at Ser-113 promotes monoubiquitination of Lys-121. It fluctuates in response to extracellular glucose, and associates with transcribed genes.

It localises to the nucleus. The protein resides in the chromosome. Core component of nucleosome. Nucleosomes wrap and compact DNA into chromatin, limiting DNA accessibility to the cellular machineries which require DNA as a template. Histones thereby play a central role in transcription regulation, DNA repair, DNA replication and chromosomal stability. DNA accessibility is regulated via a complex set of post-translational modifications of histones, also called histone code, and nucleosome remodeling. This is Histone H2B 1.1 from Xenopus laevis (African clawed frog).